The following is a 675-amino-acid chain: Pesticidal crystal protein Cry25Aa (675 aa).

Belongs to the delta endotoxin family.

In terms of biological role, promotes colloidosmotic lysis by binding to the midgut epithelial cells of insects. The polypeptide is Pesticidal crystal protein Cry25Aa (cry25Aa) (Bacillus thuringiensis subsp. jegathesan).